Reading from the N-terminus, the 592-residue chain is Testis-specific serine kinase substrate (592 aa).

Phosphoserine is present on Ser217. The tract at residues 232–308 (QDETPRRQEA…VPAGWGMGPR (77 aa)) is disordered. The span at 234 to 264 (ETPRRQEAELQEPEEKQEPEEKQEPEEKQKP) shows a compositional bias: basic and acidic residues. The span at 269-281 (SWNSLGPAATSQG) shows a compositional bias: polar residues. Phosphoserine; by TSSK1 and TSSK2 is present on Ser288. Residue Ser316 is modified to Phosphoserine. The tract at residues 566–592 (LEGSTGTMGGGSSAGTPPKQGGSAPEQ) is disordered.

Phosphorylated on serine residue(s) by STK22A/TSSK1 and STK22B/TSSK2. In terms of tissue distribution, highly expressed in testis. Expressed at low levels in prostate, female breast, placenta, ovary and thymus.

It localises to the cytoplasm. The protein localises to the cytoskeleton. It is found in the microtubule organizing center. Its subcellular location is the centrosome. The protein resides in the centriole. In terms of biological role, may play a role in testicular physiology, most probably in the process of spermatogenesis or spermatid development. In Homo sapiens (Human), this protein is Testis-specific serine kinase substrate (TSKS).